Consider the following 233-residue polypeptide: Glycerol-3-phosphate acyltransferase (233 aa).

The next 5 helical transmembrane spans lie at 7–27 (WIII…GYII), 94–114 (ISIV…YIGF), 127–147 (VIAI…IVAF), 153–173 (SIGS…GVLI), and 185–205 (ISYE…LLII).

Belongs to the PlsY family. Probably interacts with PlsX.

It localises to the cell membrane. It catalyses the reaction an acyl phosphate + sn-glycerol 3-phosphate = a 1-acyl-sn-glycero-3-phosphate + phosphate. It participates in lipid metabolism; phospholipid metabolism. Functionally, catalyzes the transfer of an acyl group from acyl-phosphate (acyl-PO(4)) to glycerol-3-phosphate (G3P) to form lysophosphatidic acid (LPA). This enzyme utilizes acyl-phosphate as fatty acyl donor, but not acyl-CoA or acyl-ACP. In Acholeplasma laidlawii, this protein is Glycerol-3-phosphate acyltransferase.